We begin with the raw amino-acid sequence, 341 residues long: Probable long-chain-alcohol O-fatty-acyltransferase 9 (341 aa).

A run of 7 helical transmembrane segments spans residues 9-29, 36-56, 82-102, 122-142, 146-166, 231-251, and 295-315; these read IIVW…SANI, LFSV…FSSV, GPLF…CFPI, FAIK…SHFL, VLLS…LGPL, MGYL…YFYI, and RLLT…PLFI.

This sequence belongs to the wax synthase family.

It is found in the membrane. It catalyses the reaction a long chain fatty alcohol + a fatty acyl-CoA = a wax ester + CoA. Its function is as follows. Catalyzes the final step in the synthesis of long-chain linear esters (waxes). The chain is Probable long-chain-alcohol O-fatty-acyltransferase 9 from Arabidopsis thaliana (Mouse-ear cress).